Reading from the N-terminus, the 283-residue chain is Protein/nucleic acid deglycase HchA (283 aa).

Positions 86, 91, and 123 each coordinate Zn(2+). Residue cysteine 185 is the Nucleophile of the active site.

This sequence belongs to the peptidase C56 family. HchA subfamily. Homodimer.

It is found in the cytoplasm. It carries out the reaction N(omega)-(1-hydroxy-2-oxopropyl)-L-arginyl-[protein] + H2O = lactate + L-arginyl-[protein] + H(+). It catalyses the reaction N(6)-(1-hydroxy-2-oxopropyl)-L-lysyl-[protein] + H2O = lactate + L-lysyl-[protein] + H(+). The enzyme catalyses S-(1-hydroxy-2-oxopropyl)-L-cysteinyl-[protein] + H2O = lactate + L-cysteinyl-[protein] + H(+). The catalysed reaction is N(omega)-(1-hydroxy-2-oxoethyl)-L-arginyl-[protein] + H2O = L-arginyl-[protein] + glycolate + H(+). It carries out the reaction N(6)-(1-hydroxy-2-oxoethyl)-L-lysyl-[protein] + H2O = glycolate + L-lysyl-[protein] + H(+). It catalyses the reaction S-(1-hydroxy-2-oxoethyl)-L-cysteinyl-[protein] + H2O = glycolate + L-cysteinyl-[protein] + H(+). The enzyme catalyses N(2)-(1-hydroxy-2-oxopropyl)-dGTP + H2O = lactate + dGTP + H(+). The catalysed reaction is N(2)-(1-hydroxy-2-oxopropyl)-GTP + H2O = lactate + GTP + H(+). It carries out the reaction N(2)-(1-hydroxy-2-oxopropyl)-GDP + H2O = lactate + GDP + H(+). It catalyses the reaction N(2)-(1-hydroxy-2-oxopropyl)-GMP + H2O = lactate + GMP + H(+). The enzyme catalyses N(2)-(1-hydroxy-2-oxoethyl)-dGTP + H2O = dGTP + glycolate + H(+). The catalysed reaction is N(2)-(1-hydroxy-2-oxoethyl)-GTP + H2O = glycolate + GTP + H(+). It carries out the reaction N(2)-(1-hydroxy-2-oxoethyl)-GDP + H2O = glycolate + GDP + H(+). It catalyses the reaction N(2)-(1-hydroxy-2-oxoethyl)-GMP + H2O = glycolate + GMP + H(+). The enzyme catalyses an N(2)-(1-hydroxy-2-oxopropyl)-guanosine in RNA + H2O = a guanosine in RNA + lactate + H(+). The catalysed reaction is an N(2)-(1-hydroxy-2-oxopropyl)-2'-deoxyguanosine in DNA + H2O = a 2'-deoxyguanosine in DNA + lactate + H(+). It carries out the reaction an N(2)-(1-hydroxy-2-oxoethyl)-guanosine in RNA + H2O = a guanosine in RNA + glycolate + H(+). It catalyses the reaction an N(2)-(1-hydroxy-2-oxoethyl)-2'-deoxyguanosine in DNA + H2O = a 2'-deoxyguanosine in DNA + glycolate + H(+). In terms of biological role, protein and nucleotide deglycase that catalyzes the deglycation of the Maillard adducts formed between amino groups of proteins or nucleotides and reactive carbonyl groups of glyoxals. Thus, functions as a protein deglycase that repairs methylglyoxal- and glyoxal-glycated proteins, and releases repaired proteins and lactate or glycolate, respectively. Deglycates cysteine, arginine and lysine residues in proteins, and thus reactivates these proteins by reversing glycation by glyoxals. Acts on early glycation intermediates (hemithioacetals and aminocarbinols), preventing the formation of Schiff bases and advanced glycation endproducts (AGE). Also functions as a nucleotide deglycase able to repair glycated guanine in the free nucleotide pool (GTP, GDP, GMP, dGTP) and in DNA and RNA. Is thus involved in a major nucleotide repair system named guanine glycation repair (GG repair), dedicated to reversing methylglyoxal and glyoxal damage via nucleotide sanitization and direct nucleic acid repair. Plays an important role in protecting cells from carbonyl stress. The chain is Protein/nucleic acid deglycase HchA from Shigella flexneri.